A 209-amino-acid polypeptide reads, in one-letter code: Uracil phosphoribosyltransferase (209 aa).

Residues arginine 79, arginine 104, and 131–139 (DPMLATGHS) contribute to the 5-phospho-alpha-D-ribose 1-diphosphate site. Residues isoleucine 194 and 199-201 (GDA) each bind uracil. Aspartate 200 serves as a coordination point for 5-phospho-alpha-D-ribose 1-diphosphate.

It belongs to the UPRTase family. Mg(2+) serves as cofactor.

The catalysed reaction is UMP + diphosphate = 5-phospho-alpha-D-ribose 1-diphosphate + uracil. The protein operates within pyrimidine metabolism; UMP biosynthesis via salvage pathway; UMP from uracil: step 1/1. Allosterically activated by GTP. Catalyzes the conversion of uracil and 5-phospho-alpha-D-ribose 1-diphosphate (PRPP) to UMP and diphosphate. The sequence is that of Uracil phosphoribosyltransferase from Caulobacter vibrioides (strain ATCC 19089 / CIP 103742 / CB 15) (Caulobacter crescentus).